A 1273-amino-acid polypeptide reads, in one-letter code: MPFDRQPLLSGEKGMPATSLWLVGGAVIAAVCVIVNTSYNGTQLSVTARPIQAAVSQVSMARFAESGVSRGSGNRVSQAVPLMAASVGAESESRRWVASAILFPLSGLFAAVALKMAMMKPKVAAVLPFTSEKDMKVWNPVNNKKFETFSYLPPLSDAQIAKQVDMIIAKGLSPCLEFAAPENSFIANDNTVRFSGTAAGYYDNRYWTMWKLPMFGCTDASQVLREISECRRAYPQCYVRLAAFDSVKQVQVISFVVQRPSGSSSSSWGMAAMTGEKDMKVWNPVNNKKFETFSYLPPLSDAQIAKQVDMIIAKGLSPCLEFAAPENSFIANDNTVRFSGTAAGYYDNRYWTMWKLPMFGCTDASQVLREISECRRAYPQCYVRLAAFDSVKQVQVISFVVQRPSGSSSSWGMAAMTGEKDMKVWNPVNNKKFETFSYLPPLSDAQIAKQVDMIIAKGLSPCLEFAAPENSFIANDNTVRFSGTAAGYYDNHYWTMWKLPMFGCTDASQVLREISECRRAYPQCYVRLAAFDSVKQVQVISFVVQRPSGSSSSSWGMAAMTGEKDMKVWNPVNNKKFETFSYLPPLSDAQIAKQVDMIIAKGLSPCLEFAAPENSFIANDNTVRFSGTAAGYYDNRYWTMWKLPMFGCTDASQVLREISECRRAYPQCYVRLAAFDSVKQVQVISFVVQRPSGSSSSWGMAAMTGEKDMKVWNPVNNKKFETFSYLPPLSDAQIAKQVDMIIAKGLSPCLEFAAPENSFIANDNTVRFSGTAAGYYDNRYWTMWKLPMFGCTDASQVLREISECRRAYPQCYVRLAAFDSVKQVQVISFVVQRPSGSSSSSSWGMAAMTGEKEMKVWNPVNNKKFETFSYLPPLSDAQIAKQVDMIIAKGLSPCLEFAAPENSFIANDNTVRFSGTAAGYYDNRYWTMWKLPMFGCTDASQVLREISECRRAYPQCYVRLAFDSVKQVQVISFVVQRPSGSSSSSWGMAAMTGEKDMKVWNPVNNKKFETFSYLPPLSDAQIAKQVDMIIAKGLSPCLEFAAPENSFIANDNTVRFSGTAAGYYDNRYWTMWKLPMFGCTDASQVLREISECRRAYPQCYVRLAAFDSVKQVQVISFVVQRPSGSSSSSWGMAAMTGEKEMKVWNPVNNKKFETFSYLPPLSDAQIAKQVDMIIAKGLSPCLEFAAPENSFIANDNTVRFSGTAAGYYDNRYWTMWKLPMFGCTDASQVLREISECRRAYPQCYVRLAAFDSVKQVQVISFVVQRPSSGGRSW.

Residues Met1 to Asp134 constitute a chloroplast transit peptide. 7 propeptides span residues Gly269–Asp278, Gly412–Asp421, Gly556–Asp565, Gly699–Asp708, Gly844–Glu853, Gly987–Asp996, and Gly1131–Glu1140.

The protein belongs to the RuBisCO small chain family. In terms of assembly, heterohexadecamer of 8 large and 8 small subunits. Eight small subunits are processed from a large polyprotein. All start with the same sequence but there is more heterogeneity at the C-terminus.

Its subcellular location is the plastid. It is found in the chloroplast. Its function is as follows. RuBisCO catalyzes two reactions: the carboxylation of D-ribulose 1,5-bisphosphate, the primary event in carbon dioxide fixation, as well as the oxidative fragmentation of the pentose substrate. Both reactions occur simultaneously and in competition at the same active site. Although the small subunit is not catalytic it is essential for maximal activity. The protein is Ribulose bisphosphate carboxylase small subunit, chloroplastic of Euglena gracilis.